Reading from the N-terminus, the 655-residue chain is p-hydroxybenzoic acid efflux pump subunit AaeB (655 aa).

The next 11 membrane-spanning stretches (helical) occupy residues 13–33, 38–58, 69–89, 93–113, 121–141, 152–172, 370–390, 407–427, 431–451, 459–479, and 482–502; these read FAVKLATAIVLALFVGFHFQL, WAVLTAAIVAAGPAFAAGGEP, LRIIGTFIGCIAGLVIIIAMI, LLMILVCCIWAGFCTWISSLV, WGLAGYTALIIVITIQPEPLL, EIVIGIVCAIMADLLFSPRSI, LFWLWTGWTSGSGAMVMIAVV, FIYGTLAALPLGLLYFLVIIP, QSMLLLCISLAVLGFFLGIEV, MGALASTINIIVLDNPMTFHF, and FLDSALGQIVGCVLAFTVILL.

Belongs to the aromatic acid exporter ArAE (TC 2.A.85) family.

The protein resides in the cell inner membrane. Its function is as follows. Forms an efflux pump with AaeA. Could function as a metabolic relief valve, allowing to eliminate certain compounds when they accumulate to high levels in the cell. The polypeptide is p-hydroxybenzoic acid efflux pump subunit AaeB (Escherichia coli O6:K15:H31 (strain 536 / UPEC)).